Here is a 72-residue protein sequence, read N- to C-terminus: Cell division protein ZapB (72 aa).

A coiled-coil region spans residues 1–71 (MSLEILDQLE…LRSLLGRIDN (71 aa)). A disordered region spans residues 36–56 (LSRQTNEQLRSENEHLKTEHH). Residues 44–56 (LRSENEHLKTEHH) are compositionally biased toward basic and acidic residues.

This sequence belongs to the ZapB family. Homodimer. The ends of the coiled-coil dimer bind to each other, forming polymers. Interacts with FtsZ.

Its subcellular location is the cytoplasm. In terms of biological role, non-essential, abundant cell division factor that is required for proper Z-ring formation. It is recruited early to the divisome by direct interaction with FtsZ, stimulating Z-ring assembly and thereby promoting cell division earlier in the cell cycle. Its recruitment to the Z-ring requires functional FtsA or ZipA. In Histophilus somni (strain 129Pt) (Haemophilus somnus), this protein is Cell division protein ZapB.